A 157-amino-acid polypeptide reads, in one-letter code: Protein PEROXIN-4 (157 aa).

The region spanning 3 to 153 (ASRARLFKEY…AQMYTRLAAM (151 aa)) is the UBC core domain. C90 functions as the Glycyl thioester intermediate in the catalytic mechanism.

Belongs to the ubiquitin-conjugating enzyme family. In terms of assembly, interacts with PEX22.

The protein resides in the peroxisome membrane. It catalyses the reaction S-ubiquitinyl-[E1 ubiquitin-activating enzyme]-L-cysteine + [E2 ubiquitin-conjugating enzyme]-L-cysteine = [E1 ubiquitin-activating enzyme]-L-cysteine + S-ubiquitinyl-[E2 ubiquitin-conjugating enzyme]-L-cysteine.. It participates in protein modification; protein ubiquitination. Its function is as follows. Required for peroxisome biogenesis. Necessary for the developmental elimination of obsolete peroxisome matrix proteins. May be involved in the ubiquitination of PEX5, targeting it for recycling. Accepts the ubiquitin from the E1 complex and catalyzes its covalent attachment to other proteins. This is Protein PEROXIN-4 (PEX4) from Arabidopsis thaliana (Mouse-ear cress).